A 215-amino-acid chain; its full sequence is 25 kDa ookinete surface antigen (215 aa).

Residues 1–16 (MNMSYLFFFFFIQLVL) form the signal peptide. Positions 29 to 58 (CKDGFLIQMSNHFECNCNPGFVLTSESTCE) constitute an EGF-like 1; truncated domain. 3 EGF-like domains span residues 59–104 (NKVE…SICV), 104–148 (VPNE…NTCT), and 151–191 (GQTE…NACI). Cystine bridges form between cysteine 63–cysteine 78, cysteine 72–cysteine 90, cysteine 92–cysteine 103, cysteine 108–cysteine 118, cysteine 113–cysteine 131, cysteine 133–cysteine 147, cysteine 155–cysteine 166, cysteine 159–cysteine 175, and cysteine 177–cysteine 190. Asparagine 144 and asparagine 163 each carry an N-linked (GlcNAc...) asparagine glycan. A lipid anchor (GPI-anchor amidated serine) is attached at serine 192. Residues 193 to 215 (FSLFNILNLSIIFIISLIYFYII) constitute a propeptide, removed in mature form. A glycan (N-linked (GlcNAc...) asparagine) is linked at asparagine 200.

The protein localises to the cell membrane. The chain is 25 kDa ookinete surface antigen from Plasmodium gallinaceum.